The sequence spans 468 residues: Charged multivesicular body protein 7 (468 aa).

2 coiled-coil regions span residues 233-303 and 353-379; these read EKLL…AETD and VSDA…MIVD. The interval 428–468 is disordered; sequence DVPSGPVVISPQRPTEWKTDQASRSPADGSFSRSVPEPVLQ.

The protein belongs to the SNF7 family.

Its subcellular location is the cytoplasm. The protein resides in the nucleus envelope. Its function is as follows. ESCRT-III-like protein required to recruit the ESCRT-III complex to the nuclear envelope during late anaphase. Together with SPAST, the ESCRT-III complex promotes nuclear envelope sealing and mitotic spindle disassembly during late anaphase. Plays a role in the endosomal sorting pathway. The chain is Charged multivesicular body protein 7 (chmp7) from Xenopus tropicalis (Western clawed frog).